Here is a 1146-residue protein sequence, read N- to C-terminus: Reverse gyrase 1 (1146 aa).

An RG N-terminal-type zinc finger spans residues 1–38 (MIKAIFDTLCPNCGGEISAERLLKGLPCEKCLPEEVNR). Zn(2+) contacts are provided by Cys-10, Cys-13, Cys-28, and Cys-31. ATP-binding positions include Gln-79 and 96 to 103 (APTGVGKT). One can recognise a Helicase ATP-binding domain in the interval 83 to 240 (ARKVFLGRSF…RLKEKPNKSE (158 aa)). A DEAD box motif is present at residues 197-200 (DDVD). Residues 412–565 (HLLWALLSLR…FKKIEEVDLK (154 aa)) form the Helicase C-terminal domain. The segment at 592–1146 (EHVKPVLVVV…KVNEFEKANV (555 aa)) is topoisomerase I. In terms of domain architecture, Toprim spans 596–728 (PVLVVVESPN…NVERIEFHEV (133 aa)). Residues Glu-602 and Asp-697 each contribute to the Mg(2+) site. The Topo IA-type catalytic domain occupies 744–1142 (NENLVKAQLV…ELYKKVNEFE (399 aa)). Tyr-891 functions as the O-(5'-phospho-DNA)-tyrosine intermediate in the catalytic mechanism.

This sequence in the N-terminal section; belongs to the DEAD box helicase family. DDVD subfamily. The protein in the C-terminal section; belongs to the type IA topoisomerase family. As to quaternary structure, monomer. Zn(2+) serves as cofactor. Mg(2+) is required as a cofactor.

The protein resides in the cytoplasm. It catalyses the reaction ATP + H2O = ADP + phosphate + H(+). Functionally, modifies the topological state of DNA by introducing positive supercoils in an ATP-dependent process, increasing the linking number in steps of +1. Binds to single-stranded DNA, transiently cleaves and then rejoins the ends, introducing a positive supercoil in the process. The scissile phosphodiester is attacked by the catalytic tyrosine of the enzyme, resulting in the formation of a DNA-(5'-phosphotyrosyl)-enzyme intermediate. Probably involved in rewinding DNA strands in regions of the chromosome that have opened up to allow replication, transcription, DNA repair and/or for DNA protection. The polypeptide is Reverse gyrase 1 (Aquifex aeolicus (strain VF5)).